The chain runs to 29 residues: HSEGTFSNDYSKYLETRRAQDFVQWLKNS.

It belongs to the glucagon family.

It localises to the secreted. Its function is as follows. Promotes hydrolysis of glycogen and lipids, and raises the blood sugar level. This chain is Glucagon (gcg), found in Thunnus obesus (Bigeye tuna).